The following is a 348-amino-acid chain: Holliday junction branch migration complex subunit RuvB (348 aa).

Residues 1-183 (MAPQPRRLIA…FGIPIRLEYY (183 aa)) are large ATPase domain (RuvB-L). ATP contacts are provided by residues Leu-22, Arg-23, Gly-64, Lys-67, Thr-68, Thr-69, 130–132 (EDF), Arg-173, Tyr-183, and Arg-220. Mg(2+) is bound at residue Thr-68. Residues 184-254 (TVEELECIVR…VADRALRLLD (71 aa)) form a small ATPAse domain (RuvB-S) region. The interval 257–348 (HIGLDQMDRR…FQLFSEGGEE (92 aa)) is head domain (RuvB-H). DNA-binding residues include Arg-293, Arg-312, and Arg-317.

Belongs to the RuvB family. As to quaternary structure, homohexamer. Forms an RuvA(8)-RuvB(12)-Holliday junction (HJ) complex. HJ DNA is sandwiched between 2 RuvA tetramers; dsDNA enters through RuvA and exits via RuvB. An RuvB hexamer assembles on each DNA strand where it exits the tetramer. Each RuvB hexamer is contacted by two RuvA subunits (via domain III) on 2 adjacent RuvB subunits; this complex drives branch migration. In the full resolvosome a probable DNA-RuvA(4)-RuvB(12)-RuvC(2) complex forms which resolves the HJ.

It localises to the cytoplasm. The enzyme catalyses ATP + H2O = ADP + phosphate + H(+). The RuvA-RuvB-RuvC complex processes Holliday junction (HJ) DNA during genetic recombination and DNA repair, while the RuvA-RuvB complex plays an important role in the rescue of blocked DNA replication forks via replication fork reversal (RFR). RuvA specifically binds to HJ cruciform DNA, conferring on it an open structure. The RuvB hexamer acts as an ATP-dependent pump, pulling dsDNA into and through the RuvAB complex. RuvB forms 2 homohexamers on either side of HJ DNA bound by 1 or 2 RuvA tetramers; 4 subunits per hexamer contact DNA at a time. Coordinated motions by a converter formed by DNA-disengaged RuvB subunits stimulates ATP hydrolysis and nucleotide exchange. Immobilization of the converter enables RuvB to convert the ATP-contained energy into a lever motion, pulling 2 nucleotides of DNA out of the RuvA tetramer per ATP hydrolyzed, thus driving DNA branch migration. The RuvB motors rotate together with the DNA substrate, which together with the progressing nucleotide cycle form the mechanistic basis for DNA recombination by continuous HJ branch migration. Branch migration allows RuvC to scan DNA until it finds its consensus sequence, where it cleaves and resolves cruciform DNA. This Methylocella silvestris (strain DSM 15510 / CIP 108128 / LMG 27833 / NCIMB 13906 / BL2) protein is Holliday junction branch migration complex subunit RuvB.